The sequence spans 666 residues: Zinc finger protein 710 (666 aa).

Residues K110 and K113 each participate in a glycyl lysine isopeptide (Lys-Gly) (interchain with G-Cter in SUMO2) cross-link. A disordered region spans residues 113–141 (KAEEEEEQEVYEVSVPGDDKDPGPAEAPA). 3 consecutive C2H2-type zinc fingers follow at residues 297–319 (WQCR…ILGH), 325–347 (HSCP…LLTH), and 353–375 (HKCQ…MLLH). Residue K379 forms a Glycyl lysine isopeptide (Lys-Gly) (interchain with G-Cter in SUMO2) linkage. 8 C2H2-type zinc fingers span residues 381-403 (YSCH…EVKH), 409-431 (HVCV…LASH), 437-459 (YQCL…MLKH), 465-487 (FVCT…SLTH), 493-515 (FKCE…MLIH), 521-543 (YQCH…MIVH), 549-571 (FKCK…MHLH), and 577-600 (FKCP…KVKH).

It belongs to the krueppel C2H2-type zinc-finger protein family.

Its subcellular location is the nucleus. Functionally, may be involved in transcriptional regulation. The sequence is that of Zinc finger protein 710 (Znf710) from Mus musculus (Mouse).